A 246-amino-acid chain; its full sequence is 1-(5-phosphoribosyl)-5-[(5-phosphoribosylamino)methylideneamino] imidazole-4-carboxamide isomerase (246 aa).

Residue Asp8 is the Proton acceptor of the active site. Residue Asp131 is the Proton donor of the active site.

Belongs to the HisA/HisF family.

The protein resides in the cytoplasm. It catalyses the reaction 1-(5-phospho-beta-D-ribosyl)-5-[(5-phospho-beta-D-ribosylamino)methylideneamino]imidazole-4-carboxamide = 5-[(5-phospho-1-deoxy-D-ribulos-1-ylimino)methylamino]-1-(5-phospho-beta-D-ribosyl)imidazole-4-carboxamide. Its pathway is amino-acid biosynthesis; L-histidine biosynthesis; L-histidine from 5-phospho-alpha-D-ribose 1-diphosphate: step 4/9. This is 1-(5-phosphoribosyl)-5-[(5-phosphoribosylamino)methylideneamino] imidazole-4-carboxamide isomerase from Lactococcus lactis subsp. cremoris (strain SK11).